Here is a 508-residue protein sequence, read N- to C-terminus: Hydroxymethylglutaryl-CoA synthase, mitochondrial (508 aa).

Residues 1-37 (MQRLLTPVRQVLRVKRAMQEASFMPPLLPPAAHQRFS) constitute a mitochondrion transit peptide. K52 carries the N6-succinyllysine modification. (3S)-3-hydroxy-3-methylglutaryl-CoA contacts are provided by E80 and A81. The active-site Proton donor/acceptor is E132. Residues C166, N204, and T208 each coordinate (3S)-3-hydroxy-3-methylglutaryl-CoA. Catalysis depends on C166, which acts as the Acyl-thioester intermediate. Position 243 is an N6-acetyllysine (K243). K256 carries the post-translational modification N6-acetyllysine; alternate. K256 is modified (N6-succinyllysine; alternate). The (3S)-3-hydroxy-3-methylglutaryl-CoA site is built by S258 and H301. H301 acts as the Proton donor/acceptor in catalysis. N6-acetyllysine is present on K306. K310 provides a ligand contact to (3S)-3-hydroxy-3-methylglutaryl-CoA. The residue at position 310 (K310) is an N6-acetyllysine; alternate. The residue at position 310 (K310) is an N6-succinyllysine; alternate. Position 333 is an N6-succinyllysine (K333). N6-acetyllysine; alternate occurs at positions 342, 350, 354, and 358. K342, K350, K354, and K358 each carry N6-succinyllysine; alternate. (3S)-3-hydroxy-3-methylglutaryl-CoA is bound by residues N380 and S414. A Phosphoserine modification is found at S433. An N6-acetyllysine modification is found at K437. A phosphoserine mark is found at S440 and S456. K473 is modified (N6-acetyllysine; alternate). At K473 the chain carries N6-succinyllysine; alternate.

This sequence belongs to the thiolase-like superfamily. HMG-CoA synthase family. In terms of assembly, homodimer. In terms of processing, succinylated. Desuccinylated by SIRT5. Succinylation, at least at Lys-310, inhibits the enzymatic activity.

The protein resides in the mitochondrion. The enzyme catalyses acetoacetyl-CoA + acetyl-CoA + H2O = (3S)-3-hydroxy-3-methylglutaryl-CoA + CoA + H(+). The protein operates within metabolic intermediate biosynthesis; (R)-mevalonate biosynthesis; (R)-mevalonate from acetyl-CoA: step 2/3. Catalyzes the first irreversible step in ketogenesis, condensing acetyl-CoA to acetoacetyl-CoA to form HMG-CoA, which is converted by HMG-CoA reductase (HMGCR) into mevalonate. The sequence is that of Hydroxymethylglutaryl-CoA synthase, mitochondrial (HMGCS2) from Sus scrofa (Pig).